We begin with the raw amino-acid sequence, 88 residues long: Large ribosomal subunit protein bL27 (88 aa).

It belongs to the bacterial ribosomal protein bL27 family.

This chain is Large ribosomal subunit protein bL27, found in Acidobacterium capsulatum (strain ATCC 51196 / DSM 11244 / BCRC 80197 / JCM 7670 / NBRC 15755 / NCIMB 13165 / 161).